A 143-amino-acid chain; its full sequence is Large ribosomal subunit protein uL15 (143 aa).

The tract at residues 1–59 (MELNTITPGQGAKHAKRRVGRGIGSGLGKTAGRGHKGQKSRSGGYHKVGFEGGQMPMQR) is disordered. Residues 21–31 (RGIGSGLGKTA) show a composition bias toward gly residues.

Belongs to the universal ribosomal protein uL15 family. In terms of assembly, part of the 50S ribosomal subunit.

Its function is as follows. Binds to the 23S rRNA. This chain is Large ribosomal subunit protein uL15, found in Polaromonas naphthalenivorans (strain CJ2).